We begin with the raw amino-acid sequence, 650 residues long: Phosphatidylinositol-3,5-bisphosphate 3-phosphatase MTMR14 (650 aa).

Residues 1–27 (MAGARAAAAAASAGSSASSGNQPPQEL) are disordered. Residue K194 is modified to N6-acetyllysine. N226 carries an N-linked (GlcNAc...) asparagine glycan. C330 (phosphocysteine intermediate) is an active-site residue. A 1,2-diacyl-sn-glycero-3-phospho-(1D-myo-inositol-3,5-bisphosphate)-binding residues include G333, W334, D335, R336, and R382. Residues G333, W334, D335, R336, and R382 each coordinate a 1,2-diacyl-sn-glycero-3-phospho-(1D-myo-inositol-3-phosphate). The segment at 476-546 (AAWRKSHSSS…PRSVDHPLPG (71 aa)) is disordered. S518 bears the Phosphoserine mark. The N-linked (GlcNAc...) asparagine glycan is linked to N519. Phosphoserine occurs at positions 530, 580, and 624. R638 carries the omega-N-methylarginine modification.

Belongs to the protein-tyrosine phosphatase family. Non-receptor class myotubularin subfamily. Expressed in various tissues, including heart, skeletal muscle, placenta, liver, lung, kidney and pancreas.

It localises to the cytoplasm. The catalysed reaction is a 1,2-diacyl-sn-glycero-3-phospho-(1D-myo-inositol-3,5-bisphosphate) + H2O = a 1,2-diacyl-sn-glycero-3-phospho-(1D-myo-inositol-5-phosphate) + phosphate. It carries out the reaction a 1,2-diacyl-sn-glycero-3-phospho-(1D-myo-inositol-3-phosphate) + H2O = a 1,2-diacyl-sn-glycero-3-phospho-(1D-myo-inositol) + phosphate. Functionally, lipid phosphatase that specifically dephosphorylates the D-3 position of phosphatidylinositol 3-phosphate and phosphatidylinositol 3,5-bisphosphate, generating phosphatidylinositol and phosphatidylinositol 5-phosphate. This Homo sapiens (Human) protein is Phosphatidylinositol-3,5-bisphosphate 3-phosphatase MTMR14.